We begin with the raw amino-acid sequence, 670 residues long: uncharacterized protein (670 aa).

Residues 53-83 form a disordered region; the sequence is PTAKPSDFPGDAVTGTQPVPREPSSLPRTTP. Tandem repeats lie at residues 143–158, 171–186, 200–214, 215–233, 234–252, 253–268, 279–293, 294–309, 320–334, 335–349, 362–376, 377–391, 392–406, 407–421, 422–436, 437–452, 464–477, 478–493, 504–517, 518–531, 532–545, 546–559, 560–573, 574–587, 588–601, 602–615, and 616–629. The tract at residues 187–225 is disordered; that stretch reads PAGANDTAVTTTSATPAGANDTAVTTTPATPAGANDTAN. A compositionally biased stretch (low complexity) spans 205–225; sequence ANDTAVTTTPATPAGANDTAN. Positions 339-395 are disordered; sequence GANDTANVTKPAGSTDTVVTTTPAMPTGATDTVVTTTPAMPTGATDTVVTTTPAMPT. Residues 342 to 362 are compositionally biased toward polar residues; the sequence is DTANVTKPAGSTDTVVTTTPA. Residues 363–395 are compositionally biased toward low complexity; sequence MPTGATDTVVTTTPAMPTGATDTVVTTTPAMPT. 2 stretches are compositionally biased toward low complexity: residues 471-482 and 490-503; these read GTVTTTTAKPTG and TKPT…TTTT. Residues 471 to 503 form a disordered region; that stretch reads GTVTTTTAKPTGANDTANVTKPTGATGTVTTTT. Low complexity predominate over residues 525–634; the sequence is GTVTTTTAKP…VTTTTAKPAG (110 aa). Positions 525–670 are disordered; the sequence is GTVTTTTAKP…GHKPKSGARR (146 aa). Residues 638-654 are compositionally biased toward basic residues; sequence GHGHGHGHGHGHGHGHG.

This is an uncharacterized protein from Ictalurid herpesvirus 1 (strain Auburn) (IcHV-1).